The following is an 811-amino-acid chain: DEP domain-containing protein 1A (811 aa).

One can recognise a DEP domain in the interval F24 to A108. The region spanning D281–I321 is the Rho-GAP domain. S512 bears the Phosphoserine mark. The interaction with ZNF224 stretch occupies residues A598 to C653.

As to quaternary structure, isoform 2 and isoform 5 can form homodimers and heterodimers. Interacts with ZNF224. In terms of tissue distribution, expressed in testis. Up-regulated in bladder cancer cells (at protein level).

Its subcellular location is the nucleus. In terms of biological role, may be involved in transcriptional regulation as a transcriptional corepressor. The DEPDC1A-ZNF224 complex may play a critical role in bladder carcinogenesis by repressing the transcription of the A20 gene, leading to transport of NF-KB protein into the nucleus, resulting in suppression of apoptosis of bladder cancer cells. This Homo sapiens (Human) protein is DEP domain-containing protein 1A (DEPDC1).